The following is a 693-amino-acid chain: Putative adenosylcobalamin-dependent ribonucleoside-triphosphate reductase (693 aa).

A disulfide bridge connects residues cysteine 90 and cysteine 386. Active-site residues include cysteine 375 and glutamate 377.

It belongs to the class II ribonucleoside-triphosphate reductase family. The cofactor is adenosylcob(III)alamin.

It catalyses the reaction a 2'-deoxyribonucleoside 5'-triphosphate + [thioredoxin]-disulfide + H2O = a ribonucleoside 5'-triphosphate + [thioredoxin]-dithiol. The chain is Putative adenosylcobalamin-dependent ribonucleoside-triphosphate reductase (50) from Mycobacterium phage D29 (Mycobacteriophage D29).